Consider the following 28-residue polypeptide: Conotoxin as14b (28 aa).

2 cysteine pairs are disulfide-bonded: Cys-7–Cys-27 and Cys-11–Cys-23.

It belongs to the conotoxin L superfamily. In terms of tissue distribution, expressed by the venom duct.

It localises to the secreted. Its function is as follows. In vivo, intracranial injection elicits scratching and grooming activity in mice, and causes body and rear limb extension and tail curling immediately upon injection. This Conus cancellatus (Cancellate cone) protein is Conotoxin as14b.